Reading from the N-terminus, the 230-residue chain is Ribulose-phosphate 3-epimerase (230 aa).

Ser-10 provides a ligand contact to substrate. Residues His-35, Asp-37, and His-68 each contribute to the a divalent metal cation site. The active-site Proton acceptor is the Asp-37. Substrate is bound by residues His-68, 146-149, 179-181, and 201-202; these read GFGG, DGG, and GS. Asp-179 is an a divalent metal cation binding site. Catalysis depends on Asp-179, which acts as the Proton donor.

It belongs to the ribulose-phosphate 3-epimerase family. As to quaternary structure, homohexamer. A divalent metal cation is required as a cofactor.

The enzyme catalyses D-ribulose 5-phosphate = D-xylulose 5-phosphate. Its pathway is carbohydrate degradation. In terms of biological role, catalyzes the reversible epimerization of D-ribulose 5-phosphate to D-xylulose 5-phosphate. This is Ribulose-phosphate 3-epimerase from Synechocystis sp. (strain ATCC 27184 / PCC 6803 / Kazusa).